The primary structure comprises 123 residues: Protein Wnt-3b (123 aa).

Ser1 is lipidated: O-palmitoleoyl serine; by PORCN. A disulfide bridge links Cys89 with Cys104. Residue Asn90 is glycosylated (N-linked (GlcNAc...) asparagine).

Belongs to the Wnt family. Palmitoleoylation is required for efficient binding to frizzled receptors. Depalmitoleoylation leads to Wnt signaling pathway inhibition.

It localises to the secreted. It is found in the extracellular space. Its subcellular location is the extracellular matrix. Functionally, ligand for members of the frizzled family of seven transmembrane receptors. Probable developmental protein. May be a signaling molecule which affects the development of discrete regions of tissues. Is likely to signal over only few cell diameters. This is Protein Wnt-3b (WNT-3B) from Plethodon jordani (Red-cheeked salamander).